A 1216-amino-acid chain; its full sequence is ATP-dependent helicase/nuclease subunit A (1216 aa).

The region spanning 26–488 (QKKTAEQIEA…IILKENFRSS (463 aa)) is the UvrD-like helicase ATP-binding domain. 47-54 (ASAGSGKT) contributes to the ATP binding site. Residues 515–802 (KHQLVFANTK…ELMTIHKSKG (288 aa)) form the UvrD-like helicase C-terminal domain.

It belongs to the helicase family. AddA subfamily. In terms of assembly, heterodimer of AddA and AddB/RexB. Requires Mg(2+) as cofactor.

The catalysed reaction is Couples ATP hydrolysis with the unwinding of duplex DNA by translocating in the 3'-5' direction.. The enzyme catalyses ATP + H2O = ADP + phosphate + H(+). In terms of biological role, the heterodimer acts as both an ATP-dependent DNA helicase and an ATP-dependent, dual-direction single-stranded exonuclease. Recognizes the chi site generating a DNA molecule suitable for the initiation of homologous recombination. The AddA nuclease domain is required for chi fragment generation; this subunit has the helicase and 3' -&gt; 5' nuclease activities. This chain is ATP-dependent helicase/nuclease subunit A, found in Streptococcus pneumoniae serotype 2 (strain D39 / NCTC 7466).